Consider the following 367-residue polypeptide: Cystinosin (367 aa).

The signal sequence occupies residues 1 to 22 (MIRRWLVIFILFPLQLIEKCES). Topologically, residues 23–125 (TVDFSVPPIV…LVIHSNIVSI (103 aa)) are lumenal. Asn51, Asn66, Asn84, Asn104, and Asn107 each carry an N-linked (GlcNAc...) asparagine glycan. In terms of domain architecture, PQ-loop 1 spans 123-189 (VSIINQVIGW…LFWVPSIKEQ (67 aa)). A helical transmembrane segment spans residues 126–150 (INQVIGWIYFVAWSVSFYPQVITNW). Over 151–159 (RRKSVVGLS) the chain is Cytoplasmic. A helical membrane pass occupies residues 160-179 (FDFVVLNLMGFVAYSVFNIG). Asn166 is a binding site for L-cystine. Over 180–202 (LFWVPSIKEQFLLKYPNGVNPVD) the chain is Lumenal. The chain crosses the membrane as a helical span at residues 203–225 (SNDVFFSLHAVALTLVVIVQCLL). Asp205 serves as a coordination point for H(+). At 226–234 (YERGSQRVS) the chain is on the cytoplasmic side. Residues 235–257 (WLAISFLVLSWLFTLIALIMAAV) form a helical membrane-spanning segment. Residues 258–263 (GATTWL) lie on the Lumenal side of the membrane. Positions 263 to 328 (LQFLFCFSYI…QSYNNDQWTL (66 aa)) constitute a PQ-loop 2 domain. A helical membrane pass occupies residues 264 to 289 (QFLFCFSYIKLAVTLVKYFPQAYMNF). L-cystine-binding residues include Lys273, Lys280, and Tyr281. Over 290-298 (HYKSTEGWS) the chain is Cytoplasmic. The helical transmembrane segment at 299-308 (IGNVLLDFTG) threads the bilayer. 2 residues coordinate L-cystine: Asn301 and Asp305. A H(+)-binding site is contributed by Asp305. Residues 309–331 (GSFSLLQMFLQSYNNDQWTLIFG) are Lumenal-facing. A helical transmembrane segment spans residues 332–354 (DPTKFGLGIFSIIFDVVFFIQHF). Asp346 serves as a coordination point for H(+). Topologically, residues 355-367 (CLYRKKPGYDQLN) are cytoplasmic. The short motif at 362–366 (GYDQL) is the Lysosomal targeting motif element.

This sequence belongs to the cystinosin family. Interacts with components of the V-ATPase complex. Interacts with components of the Ragulator complex. Interacts with RRAGA/RagA and RRAGC/RagC. Interacts with AP-3 complex subunit mu (AP3M1 or AP3M2).

Its subcellular location is the lysosome membrane. The protein resides in the melanosome membrane. The catalysed reaction is L-cystine(out) + H(+)(out) = L-cystine(in) + H(+)(in). Its activity is regulated as follows. Switches between a lumen- and a cytosol-open conformation: pH induces conformational changes and shifts the equilibrium to facilitate the transition between the lumen- and cytosol-open conformation, thereby promoting cystine transport. Protonation of specific aspartate residues (Asp-205, Asp-305 and Asp-346) favors the cytosol-open conformation. Cystine/H(+) symporter that mediates export of cystine, the oxidized dimer of cysteine, from lysosomes. Plays an important role in melanin synthesis by catalyzing cystine export from melanosomes, possibly by inhibiting pheomelanin synthesis. In addition to cystine export, also acts as a positive regulator of mTORC1 signaling in kidney proximal tubular cells, via interactions with components of the v-ATPase and Ragulator complexes. Also involved in small GTPase-regulated vesicle trafficking and lysosomal localization of LAMP2A, independently of cystine transporter activity. In Bos taurus (Bovine), this protein is Cystinosin.